The primary structure comprises 137 residues: Protein BNS1 (137 aa).

Functionally, component of the FEAR (CDC14 early anaphase release) network which promotes CDC14 release from the nucleolus during early anaphase and is required for the efficient segregation of telomeric and nucleolar regions. Although BNS1 can partially compensate for a lack of SPO12 function when overexpressed, it does not appear to play any role in controlling meiotic nuclear division. The polypeptide is Protein BNS1 (BNS1) (Saccharomyces cerevisiae (strain ATCC 204508 / S288c) (Baker's yeast)).